The following is a 293-amino-acid chain: Protease HtpX (293 aa).

The next 2 helical transmembrane spans lie at 4 to 24 and 34 to 54; these read IALF…VLSL and GLMI…LLMS. Residue H139 participates in Zn(2+) binding. E140 is a catalytic residue. H143 contacts Zn(2+). 2 consecutive transmembrane segments (helical) span residues 158-178 and 193-213; these read IVNT…SGFL and LVYF…ASII. E222 serves as a coordination point for Zn(2+).

It belongs to the peptidase M48B family. Requires Zn(2+) as cofactor.

It localises to the cell inner membrane. The protein is Protease HtpX of Pectobacterium carotovorum subsp. carotovorum (strain PC1).